The following is a 113-amino-acid chain: UPF0122 protein MGAS10270_Spy1030 (113 aa).

It belongs to the UPF0122 family.

In terms of biological role, might take part in the signal recognition particle (SRP) pathway. This is inferred from the conservation of its genetic proximity to ftsY/ffh. May be a regulatory protein. This Streptococcus pyogenes serotype M2 (strain MGAS10270) protein is UPF0122 protein MGAS10270_Spy1030.